The primary structure comprises 181 residues: Probable integrase/recombinase YoeC (181 aa).

Residues 3–176 (IVQPIRSLEK…DEDTTRAAYK (174 aa)) enclose the Tyr recombinase domain. Catalysis depends on residues Arg-40, Lys-64, His-128, Arg-131, and His-154. Residue Tyr-163 is the O-(3'-phospho-DNA)-tyrosine intermediate of the active site.

Belongs to the 'phage' integrase family.

This chain is Probable integrase/recombinase YoeC (yoeC), found in Bacillus subtilis (strain 168).